The primary structure comprises 237 residues: Sugar fermentation stimulation protein homolog (237 aa).

It belongs to the SfsA family.

The sequence is that of Sugar fermentation stimulation protein homolog from Pseudomonas putida (strain GB-1).